We begin with the raw amino-acid sequence, 104 residues long: Putative heat shock protein PS1 (104 aa).

N11 and N18 each carry an N-linked (GlcNAc...) asparagine glycan. N18 contacts ATP.

The protein belongs to the heat shock protein 90 family. In terms of assembly, homodimer.

The protein resides in the cytoplasm. Its function is as follows. Putative molecular chaperone that may promote the maturation, structural maintenance and proper regulation of specific target proteins. This chain is Putative heat shock protein PS1, found in Pinus strobus (Eastern white pine).